Consider the following 582-residue polypeptide: MKSIILFVLSLLLILEKQAAVMGQKGGSKGQLSSGSSRFPHRHRSQHYSGQKDKQHTESKGSFSIQHTYHVDANDHDRTRKSQQYYLNAQHKTTKSKQHLRRHQRLLNYKQKGRGRVKPKRHFHLIVIHRKGGQVHHGTQNPSQDQGNSPSGKGISSQYSNTEERLRVRGLSKEQASASGAQKGRTQGGSQTNYVLQTEELVANKQQRETQNSHRNKGHYQNVVDVRXEHSSKLQTSLRPAHQHKLQHGYKDIFTTQDELLVYNKNQHQTKNLNQDQEHGRKAHKGSYQSSSTEERQPNHEEKSVQKGVPKGSISIQTEEKIYGKSQNQVTIPSQDQEHGHKENKISYQSSSAEERRLNSGEKGIQKGVSKGSISIQTEEKIHGKSQNQVAIPSQDQEHGHKENKISYQSSSAEERQLNSGEKGIQKGVSKGSISIQTEEKIYGKSQNQVTIPSQDQEHGHKENKIAYQSSSTEERQLNYGGKSIQKDVSQSSLSFQTEKLVEGKSQIQTPNPNQGQWSGQNAKGNSGKSADRKQDLLSHEQEGRYQQEFSGAHNTVNIEHKVAYDDLLTQQYNEDRNPIST.

An N-terminal signal peptide occupies residues 1 to 23 (MKSIILFVLSLLLILEKQAAVMG). Disordered stretches follow at residues 25–62 (KGGSKGQLSSGSSRFPHRHRSQHYSGQKDKQHTESKGS), 91–190 (HKTT…QGGS), and 272–553 (NLNQ…FSGA). A compositionally biased stretch (basic and acidic residues) spans 50–59 (GQKDKQHTES). The span at 92 to 134 (KTTKSKQHLRRHQRLLNYKQKGRGRVKPKRHFHLIVIHRKGGQ) shows a compositional bias: basic residues. Polar residues-rich tracts occupy residues 137–161 (HGTQNPSQDQGNSPSGKGISSQYSN) and 174–190 (EQASASGAQKGRTQGGS). Residues 293–305 (TEERQPNHEEKSV) are compositionally biased toward basic and acidic residues. Residues 325–335 (KSQNQVTIPSQ) are compositionally biased toward polar residues. A compositionally biased stretch (basic and acidic residues) spans 336–345 (DQEHGHKENK). Residues 385–395 (KSQNQVAIPSQ) show a composition bias toward polar residues. Basic and acidic residues predominate over residues 396-405 (DQEHGHKENK). The segment covering 445-455 (KSQNQVTIPSQ) has biased composition (polar residues). Over residues 456–465 (DQEHGHKENK) the composition is skewed to basic and acidic residues. 2 stretches are compositionally biased toward polar residues: residues 487–498 (KDVSQSSLSFQT) and 506–529 (SQIQTPNPNQGQWSGQNAKGNSGK). Positions 530–546 (SADRKQDLLSHEQEGRY) are enriched in basic and acidic residues.

This sequence belongs to the semenogelin family. In terms of assembly, interacts with SERPINA5.

Its subcellular location is the secreted. Participates in the formation of a gel matrix (sperm coagulum) entrapping the accessory gland secretions and ejaculated spermatozoa. The chain is Semenogelin-2 (SEMG2) from Macaca fascicularis (Crab-eating macaque).